A 478-amino-acid polypeptide reads, in one-letter code: RNA pseudouridine synthase 3, mitochondrial (478 aa).

Residues 1–20 (MWKAKTCFRQIYLTVLIRRY) constitute a mitochondrion transit peptide. One can recognise an S4 RNA-binding domain in the interval 92-162 (EEIYDKAIQT…MRISKRYDTI (71 aa)). Aspartate 232 is a catalytic residue.

It belongs to the pseudouridine synthase RluA family.

Its subcellular location is the mitochondrion. It carries out the reaction a uridine in RNA = a pseudouridine in RNA. The protein is RNA pseudouridine synthase 3, mitochondrial of Arabidopsis thaliana (Mouse-ear cress).